Here is a 345-residue protein sequence, read N- to C-terminus: MKEFDLESYDYHLPKELIANYPILPKEKAKLLIYERHSQKITHTTFEHVLDFFPKNTLVVLNDTKVIKARLFGSKYAFLPSKTTEVFFHRFLKNNTALTQIKGKIKVGDKIFFDENHYAEVLELLNNGQRLIAFYDNKTPLDQASILKLLEQYGHMPLPPYIKRADESLDTLEYQSVFAKHIGAVAAPTASLHFSQNTLENLLKDFKHTFLTLHVGAGTFASVETKDIREHQIHTEVLHIPKKSQEILQKSQEILCIGTTALRSVEYFKRLKTPKQEAFECDIFLHLANPIQHANYLLTNFHLPKSSLLMLVSAMIGLEKTKEIYQIAIEKKYRFYSYGDGMLIL.

Belongs to the QueA family. Monomer.

It is found in the cytoplasm. It catalyses the reaction 7-aminomethyl-7-carbaguanosine(34) in tRNA + S-adenosyl-L-methionine = epoxyqueuosine(34) in tRNA + adenine + L-methionine + 2 H(+). Its pathway is tRNA modification; tRNA-queuosine biosynthesis. Its function is as follows. Transfers and isomerizes the ribose moiety from AdoMet to the 7-aminomethyl group of 7-deazaguanine (preQ1-tRNA) to give epoxyqueuosine (oQ-tRNA). The chain is S-adenosylmethionine:tRNA ribosyltransferase-isomerase from Helicobacter acinonychis (strain Sheeba).